Here is a 471-residue protein sequence, read N- to C-terminus: Proton-coupled amino acid transporter-like protein pathetic (471 aa).

N61 is a glycosylation site (N-linked (GlcNAc...) asparagine). 10 helical membrane-spanning segments follow: residues 81–101 (FAFM…TAFI), 153–173 (ILFG…VIVA), 187–207 (AVSL…IAWV), 216–236 (VSMV…YYLV), 253–273 (LPQF…VMPL), 283–303 (FLGI…IYML), 337–357 (LISL…LEII), 375–395 (VLRT…PTIG), 397–417 (FMGL…PVVI), and 432–452 (WILW…VFGT).

Belongs to the amino acid/polyamine transporter 2 family. As to expression, in third instar larvae, expressed at highest levels in the brain and digestive system with particularly high levels in surface glia of the brain (at protein level). In third instar larvae, expressed in all cells of the body wall (at protein level). Within the body wall of third instar larvae, most highly expressed in epithelial cells and sensory neurons. Expressed at a similar level in all da neurons (at protein level). Widely expressed during embryonic and late larval stages. Levels are highly dynamic in embryogenesis with surges of expression in many structures, including muscle primordia, salivary glands, proventriculus, trachea and gonads. Expressed in all or most cells of larval imaginal disks. Expression is also particularly strong in the pouch and hinge regions of the wing disk and in the morphogenetic furrow of the eye disk.

The protein resides in the cell membrane. Its subcellular location is the lysosome membrane. The protein localises to the late endosome membrane. It localises to the cell projection. It is found in the axon. The protein resides in the dendrite. Its subcellular location is the perikaryon. The protein localises to the cytoplasm. In terms of biological role, amino acid transporter which has pH-dependent electrogenic transport activity for alanine and glycine but not for proline. Plays a role in positive regulation of growth by directly or indirectly modulating the effects of the TOR signaling pathway. Required in a cell-autonomous manner for dendrite growth in neurons with large dendrite arbors. The polypeptide is Proton-coupled amino acid transporter-like protein pathetic (Drosophila melanogaster (Fruit fly)).